Here is a 376-residue protein sequence, read N- to C-terminus: Deoxyuridine 5'-triphosphate nucleotidohydrolase (376 aa).

It belongs to the dUTPase family. Mg(2+) serves as cofactor.

It carries out the reaction dUTP + H2O = dUMP + diphosphate + H(+). Functionally, involved in nucleotide metabolism: produces dUMP, the immediate precursor of thymidine nucleotides and decreases the intracellular concentration of dUTP to avoid uracil incorporation into viral DNA. The sequence is that of Deoxyuridine 5'-triphosphate nucleotidohydrolase from Human herpesvirus 6B (strain Z29) (HHV-6 variant B).